The following is a 456-amino-acid chain: Bifunctional protein GlmU (456 aa).

The pyrophosphorylase stretch occupies residues 1 to 229; sequence MLNNAMSVVI…LSEVEGVNNR (229 aa). UDP-N-acetyl-alpha-D-glucosamine contacts are provided by residues 11 to 14, Lys25, Gln76, 81 to 82, 103 to 105, Gly140, Glu154, Asn169, and Asn227; these read LAAG, GT, and YGD. Asp105 is a Mg(2+) binding site. Asn227 lines the Mg(2+) pocket. Residues 230–250 are linker; it reads LQLSRLERVYQSEQAEKLLLA. Residues 251–456 are N-acetyltransferase; sequence GVMLRDPARF…EGWRRPVKKK (206 aa). Arg333 and Lys351 together coordinate UDP-N-acetyl-alpha-D-glucosamine. Catalysis depends on His363, which acts as the Proton acceptor. Residues Tyr366 and Asn377 each coordinate UDP-N-acetyl-alpha-D-glucosamine. Acetyl-CoA-binding positions include Ala380, 386–387, Ser405, Ala423, and Arg440; that span reads NY.

It in the N-terminal section; belongs to the N-acetylglucosamine-1-phosphate uridyltransferase family. In the C-terminal section; belongs to the transferase hexapeptide repeat family. As to quaternary structure, homotrimer. It depends on Mg(2+) as a cofactor.

It is found in the cytoplasm. It carries out the reaction alpha-D-glucosamine 1-phosphate + acetyl-CoA = N-acetyl-alpha-D-glucosamine 1-phosphate + CoA + H(+). The enzyme catalyses N-acetyl-alpha-D-glucosamine 1-phosphate + UTP + H(+) = UDP-N-acetyl-alpha-D-glucosamine + diphosphate. It participates in nucleotide-sugar biosynthesis; UDP-N-acetyl-alpha-D-glucosamine biosynthesis; N-acetyl-alpha-D-glucosamine 1-phosphate from alpha-D-glucosamine 6-phosphate (route II): step 2/2. It functions in the pathway nucleotide-sugar biosynthesis; UDP-N-acetyl-alpha-D-glucosamine biosynthesis; UDP-N-acetyl-alpha-D-glucosamine from N-acetyl-alpha-D-glucosamine 1-phosphate: step 1/1. The protein operates within bacterial outer membrane biogenesis; LPS lipid A biosynthesis. Functionally, catalyzes the last two sequential reactions in the de novo biosynthetic pathway for UDP-N-acetylglucosamine (UDP-GlcNAc). The C-terminal domain catalyzes the transfer of acetyl group from acetyl coenzyme A to glucosamine-1-phosphate (GlcN-1-P) to produce N-acetylglucosamine-1-phosphate (GlcNAc-1-P), which is converted into UDP-GlcNAc by the transfer of uridine 5-monophosphate (from uridine 5-triphosphate), a reaction catalyzed by the N-terminal domain. The protein is Bifunctional protein GlmU of Escherichia fergusonii (strain ATCC 35469 / DSM 13698 / CCUG 18766 / IAM 14443 / JCM 21226 / LMG 7866 / NBRC 102419 / NCTC 12128 / CDC 0568-73).